A 274-amino-acid chain; its full sequence is Dermonecrotic toxin SdSicTox-betaIIB1bv (274 aa).

His-5 is a catalytic residue. Glu-25 and Asp-27 together coordinate Mg(2+). His-41 (nucleophile) is an active-site residue. 2 disulfides stabilise this stretch: Cys-45–Cys-51 and Cys-47–Cys-190. A Mg(2+)-binding site is contributed by Asp-85.

The protein belongs to the arthropod phospholipase D family. Class II subfamily. Mg(2+) serves as cofactor. Expressed by the venom gland.

It is found in the secreted. The catalysed reaction is an N-(acyl)-sphingosylphosphocholine = an N-(acyl)-sphingosyl-1,3-cyclic phosphate + choline. It carries out the reaction an N-(acyl)-sphingosylphosphoethanolamine = an N-(acyl)-sphingosyl-1,3-cyclic phosphate + ethanolamine. The enzyme catalyses a 1-acyl-sn-glycero-3-phosphocholine = a 1-acyl-sn-glycero-2,3-cyclic phosphate + choline. It catalyses the reaction a 1-acyl-sn-glycero-3-phosphoethanolamine = a 1-acyl-sn-glycero-2,3-cyclic phosphate + ethanolamine. Its function is as follows. Dermonecrotic toxins cleave the phosphodiester linkage between the phosphate and headgroup of certain phospholipids (sphingolipid and lysolipid substrates), forming an alcohol (often choline) and a cyclic phosphate. This toxin acts on sphingomyelin (SM). It may also act on ceramide phosphoethanolamine (CPE), lysophosphatidylcholine (LPC) and lysophosphatidylethanolamine (LPE), but not on lysophosphatidylserine (LPS), and lysophosphatidylglycerol (LPG). It acts by transphosphatidylation, releasing exclusively cyclic phosphate products as second products. Induces dermonecrosis, hemolysis, increased vascular permeability, edema, inflammatory response, and platelet aggregation. In Sicarius cf. damarensis (strain GJB-2008) (Six-eyed sand spider), this protein is Dermonecrotic toxin SdSicTox-betaIIB1bv.